We begin with the raw amino-acid sequence, 943 residues long: Mechanosensitive ion channel protein BA (943 aa).

Positions 1-67 (MPNPNDVTID…PPSSSLGFGH (67 aa)) are disordered. The Cytoplasmic segment spans residues 1-107 (MPNPNDVTID…AVLNFSTVTR (107 aa)). Over residues 14–37 (TSVSSRGQTGARNNSTNIPNSPSG) the composition is skewed to polar residues. Residues 108–130 (YLIYIAPLAALLAIPIIVGATAA) form a helical membrane-spanning segment. At 131 to 149 (EDAKIGGVSLPWFFCWVEV) the chain is on the lumenal side. Residues 150–175 (VWVSLWVCKLVAKVIPFVFQFVCGIV) form a helical membrane-spanning segment. Topologically, residues 176-195 (SAGTRKYALILRNLEIPITM) are cytoplasmic. Residues 196–214 (VLWMIVSLVTFLPIMVYNP) traverse the membrane as a helical segment. The Lumenal portion of the chain corresponds to 215 to 233 (RNKREGDTETKSWEKSVKN). A helical membrane pass occupies residues 234–259 (VLFAFLVCALIFLGEKTLVQLISISY). Residues 260–468 (HRKQFDARIK…DQAIHVLDNL (209 aa)) lie on the Cytoplasmic side of the membrane. One can recognise an EF-hand domain in the interval 412 to 447 (GKEAEAEECFTMLDRDGNGDISLDEIILAISEIGRT). Positions 425, 427, 429, 431, and 436 each coordinate Ca(2+). The helical transmembrane segment at 469–489 (LATIAFIIAVLVFVSFVTSGF) threads the bilayer. The Lumenal portion of the chain corresponds to 490-502 (GTVIAAGATSLLS). A helical membrane pass occupies residues 503–523 (LSFVFATTAQEVLGSCIFLFV). Over 524 to 943 (KHPFDIGDRV…QRRNYESRRL (420 aa)) the chain is Cytoplasmic. Residues 677–943 (PGAAAEDAAA…QRRNYESRRL (267 aa)) form a disordered region. 2 stretches are compositionally biased toward low complexity: residues 678–687 (GAAAEDAAAA) and 744–759 (GASA…AGSA). Positions 760 to 781 (YSETTLNNTVSEPYQRSFTPNT) are enriched in polar residues. Positions 798–810 (TERHLGVSHDSIA) are enriched in basic and acidic residues. The segment covering 827-842 (TTANQSLASPTTMQSE) has biased composition (polar residues). A compositionally biased stretch (low complexity) spans 857–880 (PSSSQYSQQYPQQQSQSPYSYTYS). Over residues 886–904 (PESSLQPLEHTTSYNQSLP) the composition is skewed to polar residues. Residues 916–943 (NSLEGHSPHVDPRHMTEEQRRNYESRRL) are compositionally biased toward basic and acidic residues.

Belongs to the MscS (TC 1.A.23) family.

It is found in the cell membrane. The catalysed reaction is Ca(2+)(in) = Ca(2+)(out). Its function is as follows. Acts as a mechanosensitive calcium channel in response to membrane stretch. Regulates intracellular calcium levels and cell volume for survival in response to hypo-osmotic shock. Involved in maintaining vacuole integrity and protecting the nuclear envelope upon hypo-osmotic shock. seems to contribute to CaCl2 toxicityIn contracstz to mscA, mscB seems to contribute to CaCl(2) toxicity. This is Mechanosensitive ion channel protein BA from Emericella nidulans (strain FGSC A4 / ATCC 38163 / CBS 112.46 / NRRL 194 / M139) (Aspergillus nidulans).